Consider the following 349-residue polypeptide: Succinylglutamate desuccinylase (349 aa).

Zn(2+) is bound by residues histidine 70, glutamate 73, and histidine 166. The active site involves glutamate 229.

Belongs to the AspA/AstE family. Succinylglutamate desuccinylase subfamily. It depends on Zn(2+) as a cofactor.

The enzyme catalyses N-succinyl-L-glutamate + H2O = L-glutamate + succinate. The protein operates within amino-acid degradation; L-arginine degradation via AST pathway; L-glutamate and succinate from L-arginine: step 5/5. Its function is as follows. Transforms N(2)-succinylglutamate into succinate and glutamate. The sequence is that of Succinylglutamate desuccinylase from Burkholderia mallei (strain ATCC 23344).